We begin with the raw amino-acid sequence, 352 residues long: tRNA pseudouridine synthase D (352 aa).

The Nucleophile role is filled by D81. The TRUD domain maps to 157–303 (GVPNYFGLQR…MAHERRILRL (147 aa)).

The protein belongs to the pseudouridine synthase TruD family.

The catalysed reaction is uridine(13) in tRNA = pseudouridine(13) in tRNA. Responsible for synthesis of pseudouridine from uracil-13 in transfer RNAs. In Ectopseudomonas mendocina (strain ymp) (Pseudomonas mendocina), this protein is tRNA pseudouridine synthase D.